The chain runs to 329 residues: Malate dehydrogenase (329 aa).

12 to 18 (GAAGQIG) serves as a coordination point for NAD(+). Substrate-binding residues include R93 and R99. Residues N106, Q113, and 130–132 (VGN) each bind NAD(+). Residues N132 and R163 each contribute to the substrate site. The Proton acceptor role is filled by H188.

The protein belongs to the LDH/MDH superfamily. MDH type 2 family.

It carries out the reaction (S)-malate + NAD(+) = oxaloacetate + NADH + H(+). In terms of biological role, catalyzes the reversible oxidation of malate to oxaloacetate. This Streptomyces griseus subsp. griseus (strain JCM 4626 / CBS 651.72 / NBRC 13350 / KCC S-0626 / ISP 5235) protein is Malate dehydrogenase.